A 48-amino-acid polypeptide reads, in one-letter code: MAGLKRKFNKGHAFTSKCVSLVKEQRARLYILRRCATMLCCWYIHGDE.

Positions 13–44 (AFTSKCVSLVKEQRARLYILRRCATMLCCWYI) are required for DVL/RTFL small polypeptide activity. A helical membrane pass occupies residues 25 to 42 (QRARLYILRRCATMLCCW).

This sequence belongs to the DVL/RTFL small polypeptides family.

It is found in the cell membrane. Small polypeptide acting as a regulatory molecule which coordinates cellular responses required for differentiation, growth and development, probably by restricting polar cell proliferation in lateral organs and coordinating socket cell recruitment and differentiation at trichome sites. The chain is Small polypeptide DEVIL 19 from Arabidopsis thaliana (Mouse-ear cress).